The sequence spans 93 residues: Large ribosomal subunit protein bL31B (93 aa).

This sequence belongs to the bacterial ribosomal protein bL31 family. Type B subfamily. In terms of assembly, part of the 50S ribosomal subunit.

This Psychrobacter arcticus (strain DSM 17307 / VKM B-2377 / 273-4) protein is Large ribosomal subunit protein bL31B.